The sequence spans 159 residues: 16 kDa outer membrane lipoprotein (159 aa).

Residues M1 to S21 form the signal peptide. The N-palmitoyl cysteine moiety is linked to residue C22. C22 is lipidated: S-diacylglycerol cysteine.

It localises to the cell outer membrane. The protein is 16 kDa outer membrane lipoprotein (smpA) of Brachyspira hyodysenteriae (Treponema hyodysenteriae).